A 162-amino-acid polypeptide reads, in one-letter code: MVTKKEFLEELTNATNEAIKAADKNGDNQLSKKEVNDMYKKCKYPNPTLATNSLFELFDLDKDGKLSVNEVKTAVLVDYIIEAETCLKKFVDIIFKADSNKDNKITWDEARQYFITSGSNEAQAKVLANSMFEDVDSDDDKCITREELREYAIEYFEIYPTE.

EF-hand domains lie at 10 to 45, 46 to 81, 85 to 120, and 123 to 158; these read ELTN…CKYP, NPTL…DYII, TCLK…SGSN, and QAKV…YFEI. Ca(2+)-binding residues include aspartate 23, asparagine 25, aspartate 27, glutamine 29, glutamate 34, aspartate 59, aspartate 61, aspartate 63, lysine 65, and glutamate 70. Positions 136, 138, 140, 142, and 147 each coordinate Ca(2+).

This Dictyostelium discoideum (Social amoeba) protein is Calcium-binding protein 4b (cbpD2).